A 194-amino-acid chain; its full sequence is Inosine triphosphate pyrophosphatase (194 aa).

ITP is bound at residue 8-13 (TGNANK). E47 serves as a coordination point for Mg(2+). Residues K59, 75–76 (DT), K92, 151–154 (FGWD), K174, and 179–180 (HR) each bind ITP.

This sequence belongs to the HAM1 NTPase family. In terms of assembly, homodimer. Mg(2+) serves as cofactor. Requires Mn(2+) as cofactor.

It localises to the cytoplasm. It is found in the nucleus. It catalyses the reaction ITP + H2O = IMP + diphosphate + H(+). It carries out the reaction dITP + H2O = dIMP + diphosphate + H(+). The enzyme catalyses XTP + H2O = XMP + diphosphate + H(+). In terms of biological role, pyrophosphatase that hydrolyzes non-canonical purine nucleotides such as inosine triphosphate (ITP), deoxyinosine triphosphate (dITP) or xanthosine 5'-triphosphate (XTP) to their respective monophosphate derivatives. The enzyme does not distinguish between the deoxy- and ribose forms. Probably excludes non-canonical purines from RNA and DNA precursor pools, thus preventing their incorporation into RNA and DNA and avoiding chromosomal lesions. The polypeptide is Inosine triphosphate pyrophosphatase (Scheffersomyces stipitis (strain ATCC 58785 / CBS 6054 / NBRC 10063 / NRRL Y-11545) (Yeast)).